A 1978-amino-acid polypeptide reads, in one-letter code: Sodium channel protein type 8 subunit alpha (1978 aa).

Disordered stretches follow at residues 1-20 and 28-62; these read MAARLLAPPGPDSFKPFTPE and RIAESKLKKPPKADGSHREDDEDSKPKPNSDLEAG. At 1-132 the chain is on the cytoplasmic side; that stretch reads MAARLLAPPG…RIAIKILIHS (132 aa). Basic and acidic residues predominate over residues 28–61; that stretch reads RIAESKLKKPPKADGSHREDDEDSKPKPNSDLEA. An I repeat occupies 114–442; sequence ILSPFNLIRR…KAMLEQLKKQ (329 aa). The helical transmembrane segment at 133–151 threads the bilayer; sequence VFSMIIMCTILTNCVFMTF. The Extracellular segment spans residues 152-158; the sequence is SNPPEWS. Residues 159–179 form a helical membrane-spanning segment; sequence KNVEYTFTGIYTFESLVKIIA. The Cytoplasmic segment spans residues 180-193; it reads RGFCIDGFTFLRDP. The chain crosses the membrane as a helical span at residues 194 to 211; the sequence is WNWLDFSVIMMAYVTEFV. Topologically, residues 212–217 are extracellular; that stretch reads DLGNVS. Asn215 is a glycosylation site (N-linked (GlcNAc...) asparagine). Residues 218–234 traverse the membrane as a helical segment; that stretch reads ALRTFRVLRALKTISVI. At 235–253 the chain is on the cytoplasmic side; sequence PGLKTIVGALIQSVKKLSD. Residues 254–273 traverse the membrane as a helical segment; sequence VMILTVFCLSVFALIGLQLF. Over 274-355 the chain is Extracellular; that stretch reads MGNLRNKCVV…PNYGYTSFDT (82 aa). Cys281 and Cys333 form a disulfide bridge. N-linked (GlcNAc...) asparagine glycosylation is found at Asn289, Asn295, Asn308, and Asn326. Residues 356–380 constitute an intramembrane region (pore-forming); that stretch reads FSWAFLALFRLMTQDYWENLYQLTL. Glu373 serves as a coordination point for Na(+). The Extracellular portion of the chain corresponds to 381-387; it reads RAAGKTY. Residues 388–408 form a helical membrane-spanning segment; sequence MIFFVLVIFVGSFYLVNLILA. Residues 409–751 are Cytoplasmic-facing; that stretch reads VVAMAYEEQN…EIVNLIVMDP (343 aa). Disordered stretches follow at residues 446 to 530 and 576 to 597; these read AQAA…KAFR and DPGSENEFADDEHSTVEESEGR. Low complexity predominate over residues 473–486; it reads SPRSSSELSKLSSK. Basic residues predominate over residues 489-500; it reads KERRNRRKKRKQ. Composition is skewed to basic and acidic residues over residues 501–530 and 586–597; these read KELSEGEEKGDPEKVFKSESEDGMRRKAFR and DEHSTVEESEGR. 2 positions are modified to phosphoserine: Ser518 and Ser520. One copy of the II repeat lies at 733–1005; sequence CHPYWIKLKE…QISVIRIKKG (273 aa). A helical transmembrane segment spans residues 752-770; it reads FVDLAITICIVLNTLFMAM. Residues 771–781 are Extracellular-facing; the sequence is EHHPMTPQFEH. A helical transmembrane segment spans residues 782-801; it reads VLAVGNLVFTGIFTAEMFLK. The Cytoplasmic segment spans residues 802-815; it reads LIAMDPYYYFQEGW. Residues 816-835 traverse the membrane as a helical segment; the sequence is NIFDGFIVSLSLMELSLADV. The Extracellular segment spans residues 836–837; the sequence is EG. Residues 838 to 855 traverse the membrane as a helical segment; that stretch reads LSVLRSFRLLRVFKLAKS. Residues 856–871 are Cytoplasmic-facing; sequence WPTLNMLIKIIGNSVG. A helical transmembrane segment spans residues 872-890; it reads ALGNLTLVLAIIVFIFAVV. Topologically, residues 891–919 are extracellular; it reads GMQLFGKSYKECVCKINQECKLPRWHMND. Residues Cys904 and Cys910 are joined by a disulfide bond. The segment at residues 920–940 is an intramembrane region (pore-forming); sequence FFHSFLIVFRVLCGEWIETMW. Na(+) contacts are provided by Glu934 and Glu937. At 941 to 953 the chain is on the extracellular side; the sequence is DCMEVAGQAMCLI. Residues Cys942 and Cys951 are joined by a disulfide bond. Residues 954–974 form a helical membrane-spanning segment; it reads VFMMVMVIGNLVVLNLFLALL. Over 975–1197 the chain is Cytoplasmic; sequence LSSFSADNLA…TCFLIVEHNW (223 aa). The segment at 1105 to 1146 is disordered; the sequence is NLNTEDVSSESDPEGSKDKLDDTSSSEGSTIDIKPEVEEVPV. The stretch at 1178-1493 is one III repeat; the sequence is LGKSWWILRK…KKYYNAMKKL (316 aa). The chain crosses the membrane as a helical span at residues 1198 to 1215; that stretch reads FETFIIFMILLSSGALAF. The Extracellular portion of the chain corresponds to 1216–1228; sequence EDIYIEQRKTIRT. Residues 1229 to 1247 traverse the membrane as a helical segment; it reads ILEYADKVFTYIFILEMLL. Topologically, residues 1248–1261 are cytoplasmic; the sequence is KWTAYGFVKFFTNA. A helical transmembrane segment spans residues 1262 to 1280; that stretch reads WCWLDFLIVAVSLVSLIAN. Over 1281 to 1288 the chain is Extracellular; sequence ALGYSELG. A helical transmembrane segment spans residues 1289-1307; it reads AIKSLRTLRALRPLRALSR. The Cytoplasmic portion of the chain corresponds to 1308-1324; that stretch reads FEGMRVVVNALVGAIPS. A helical membrane pass occupies residues 1325–1344; it reads IMNVLLVCLIFWLIFSIMGV. Residues 1345 to 1397 are Extracellular-facing; the sequence is NLFAGKYHYCFNETSEIRFEIDIVNNKTDCEKLMEGNSTEIRWKNVKINFDNV. Cys1354 and Cys1374 are disulfide-bonded. N-linked (GlcNAc...) asparagine glycosylation is found at Asn1356, Asn1370, and Asn1381. The segment at residues 1398–1419 is an intramembrane region (pore-forming); it reads GAGYLALLQVATFKGWMDIMYA. The Extracellular segment spans residues 1420-1436; it reads AVDSRKPDEQPDYEGNI. Residues 1437–1458 form a helical membrane-spanning segment; sequence YMYIYFVIFIIFGSFFTLNLFI. Over 1459–1521 the chain is Cytoplasmic; that stretch reads GVIIDNFNQQ…IVFDFVTQQA (63 aa). A Phosphoserine; by PKC modification is found at Ser1495. The stretch at 1502 to 1799 is one IV repeat; sequence IPRPLNKIQG…WEKFDPDATQ (298 aa). A helical transmembrane segment spans residues 1522-1539; the sequence is FDIVIMMLICLNMVTMMV. Topologically, residues 1540 to 1550 are extracellular; it reads ETDTQSKQMEN. Residues 1551–1569 traverse the membrane as a helical segment; it reads ILYWINLVFVIFFTCECVL. Residues 1570–1581 are Cytoplasmic-facing; the sequence is KMFALRHYYFTI. Residues 1582–1599 form a helical membrane-spanning segment; the sequence is GWNIFDFVVVILSIVGMF. The Extracellular portion of the chain corresponds to 1600–1612; it reads LADIIEKYFVSPT. The helical transmembrane segment at 1613–1629 threads the bilayer; sequence LFRVIRLARIGRILRLI. The Cytoplasmic segment spans residues 1630-1648; sequence KGAKGIRTLLFALMMSLPA. The helical transmembrane segment at 1649-1666 threads the bilayer; that stretch reads LFNIGLLLFLVMFIFSIF. Over 1667 to 1688 the chain is Extracellular; the sequence is GMSNFAYVKHEAGIDDMFNFET. An intramembrane region (pore-forming) is located at residues 1689 to 1711; sequence FGNSMICLFQITTSAGWDGLLLP. The Extracellular portion of the chain corresponds to 1712–1740; the sequence is ILNRPPDCSLDKEHPGSGFKGDCGNPSVG. A disulfide bond links Cys1719 and Cys1734. A helical membrane pass occupies residues 1741–1763; it reads IFFFVSYIIISFLIVVNMYIAII. Over 1764-1978 the chain is Cytoplasmic; it reads LENFSVATEE…RQKEVRESKC (215 aa). The 30-residue stretch at 1893–1922 folds into the IQ domain; sequence EEVSAVVLQRAYRGHLARRGFICRKMASNK. A disordered region spans residues 1923–1978; that stretch reads LENGGTHRDKKESTPSTASLPSYDSVTKPDKEKQQRAEEGRRERAKRQKEVRESKC. Polar residues predominate over residues 1936 to 1947; that stretch reads TPSTASLPSYDS. The span at 1949–1978 shows a compositional bias: basic and acidic residues; sequence TKPDKEKQQRAEEGRRERAKRQKEVRESKC.

This sequence belongs to the sodium channel (TC 1.A.1.10) family. Nav1.6/SCN8A subfamily. The voltage-sensitive sodium channel consists of an ion-conducting pore-forming alpha subunit regulated by one or more beta-1 (SCN1B), beta-2 (SCN2B), beta-3 (SCN3B) and/or beta-4 (SCN4B) subunits. Beta-1 (SCN1B) and beta-3 (SCN3B) are non-covalently associated with alpha, while beta-2 (SCN2B) and beta-4 (SCN4B) are covalently linked by disulfide bonds. Interacts with NEDD4 and NEDD4L. Interacts with FGF13. Interacts with FGF14, GBG3, GBB2 and SCN1B. Interacts with TMEM233. Interacts with the conotoxin GVIIJ. Interacts with CALM1; the interaction modulates the inactivation rate of SCN8A. May be ubiquitinated by NEDD4L; which would promote its endocytosis. In terms of processing, phosphorylation at Ser-1495 by PKC in a highly conserved cytoplasmic loop slows inactivation of the sodium channel and reduces peak sodium currents. As to expression, isoform 1 is highly expressed in brain, moderately in spinal cord, and at low levels in dorsal root ganglia, nodose ganglia and superior cervical ganglia. Not detected in sciatic nerve and non-neuronal tissues. Isoform 2 is hardly detectable, if at all, in brain, expressed at low levels in spinal cord and at highest levels in dorsal root ganglia.

The protein resides in the cell membrane. The protein localises to the cell projection. Its subcellular location is the axon. The catalysed reaction is Na(+)(in) = Na(+)(out). In terms of biological role, pore-forming subunit of a voltage-gated sodium channel complex assuming opened or closed conformations in response to the voltage difference across membranes and through which sodium ions selectively pass along their electrochemical gradient. Contributes to neuronal excitability by regulating action potential threshold and propagation. The polypeptide is Sodium channel protein type 8 subunit alpha (Rattus norvegicus (Rat)).